Reading from the N-terminus, the 415-residue chain is Serine hydroxymethyltransferase (415 aa).

(6S)-5,6,7,8-tetrahydrofolate-binding positions include L117 and 121–123 (GHL). An N6-(pyridoxal phosphate)lysine modification is found at K226. Residues E241 and 349-351 (SPF) contribute to the (6S)-5,6,7,8-tetrahydrofolate site.

This sequence belongs to the SHMT family. As to quaternary structure, homodimer. The cofactor is pyridoxal 5'-phosphate.

Its subcellular location is the cytoplasm. The catalysed reaction is (6R)-5,10-methylene-5,6,7,8-tetrahydrofolate + glycine + H2O = (6S)-5,6,7,8-tetrahydrofolate + L-serine. The protein operates within one-carbon metabolism; tetrahydrofolate interconversion. Its pathway is amino-acid biosynthesis; glycine biosynthesis; glycine from L-serine: step 1/1. In terms of biological role, catalyzes the reversible interconversion of serine and glycine with tetrahydrofolate (THF) serving as the one-carbon carrier. This reaction serves as the major source of one-carbon groups required for the biosynthesis of purines, thymidylate, methionine, and other important biomolecules. Also exhibits THF-independent aldolase activity toward beta-hydroxyamino acids, producing glycine and aldehydes, via a retro-aldol mechanism. The chain is Serine hydroxymethyltransferase from Geobacter sulfurreducens (strain ATCC 51573 / DSM 12127 / PCA).